Here is an 883-residue protein sequence, read N- to C-terminus: Leucine--tRNA ligase (883 aa).

Positions 43–53 match the 'HIGH' region motif; the sequence is PYPSGRIHIGH. The 'KMSKS' region signature appears at 630-634; sequence KMSKS. Residue Lys633 participates in ATP binding.

It belongs to the class-I aminoacyl-tRNA synthetase family.

It is found in the cytoplasm. The catalysed reaction is tRNA(Leu) + L-leucine + ATP = L-leucyl-tRNA(Leu) + AMP + diphosphate. This Nitrobacter winogradskyi (strain ATCC 25391 / DSM 10237 / CIP 104748 / NCIMB 11846 / Nb-255) protein is Leucine--tRNA ligase.